Consider the following 428-residue polypeptide: Enolase (428 aa).

Glutamine 162 is a binding site for (2R)-2-phosphoglycerate. Catalysis depends on glutamate 204, which acts as the Proton donor. Mg(2+) contacts are provided by aspartate 241, glutamate 283, and aspartate 310. Lysine 335, arginine 364, serine 365, and lysine 386 together coordinate (2R)-2-phosphoglycerate. The active-site Proton acceptor is lysine 335.

The protein belongs to the enolase family. Mg(2+) is required as a cofactor.

It localises to the cytoplasm. Its subcellular location is the secreted. It is found in the cell surface. It catalyses the reaction (2R)-2-phosphoglycerate = phosphoenolpyruvate + H2O. It functions in the pathway carbohydrate degradation; glycolysis; pyruvate from D-glyceraldehyde 3-phosphate: step 4/5. Its function is as follows. Catalyzes the reversible conversion of 2-phosphoglycerate (2-PG) into phosphoenolpyruvate (PEP). It is essential for the degradation of carbohydrates via glycolysis. The sequence is that of Enolase from Rhodococcus opacus (strain B4).